The primary structure comprises 480 residues: Ammonium transporter 2 member 4 (480 aa).

Residues methionine 1–threonine 27 are Extracellular-facing. Residues alanine 28–valine 48 form a helical membrane-spanning segment. Residues lysine 49 to threonine 51 are Cytoplasmic-facing. A helical membrane pass occupies residues tryptophan 52–valine 72. Residues serine 73–threonine 113 lie on the Extracellular side of the membrane. Asparagine 111 carries an N-linked (GlcNAc...) asparagine glycan. A helical transmembrane segment spans residues methionine 114–leucine 134. The Cytoplasmic segment spans residues glycine 135 to alanine 141. Residues tryptophan 142–tryptophan 162 traverse the membrane as a helical segment. Topologically, residues cysteine 163–aspartate 175 are extracellular. Residues phenylalanine 176 to tryptophan 196 form a helical membrane-spanning segment. At valine 197–asparagine 214 the chain is on the cytoplasmic side. Residues methionine 215 to glycine 235 traverse the membrane as a helical segment. Topologically, residues alanine 236–threonine 242 are extracellular. Residues isoleucine 243–valine 263 traverse the membrane as a helical segment. The Cytoplasmic segment spans residues methionine 264–threonine 274. Residues valine 275–valine 295 traverse the membrane as a helical segment. The Extracellular segment spans residues valine 296–glycine 298. The chain crosses the membrane as a helical span at residues tryptophan 299–leucine 319. Residues histidine 320–alanine 334 lie on the Cytoplasmic side of the membrane. The chain crosses the membrane as a helical span at residues valine 335–valine 355. Residues proline 356–glutamine 394 lie on the Extracellular side of the membrane. The helical transmembrane segment at isoleucine 395 to isoleucine 415 threads the bilayer. The Cytoplasmic portion of the chain corresponds to valine 416–valine 480.

This sequence belongs to the ammonia transporter channel (TC 1.A.11.2) family.

It localises to the cell membrane. Its function is as follows. Involved in ammonium transport. May be involved in arbuscular mycorrhizal (AM) symbiosis with AM fungi. This chain is Ammonium transporter 2 member 4, found in Medicago truncatula (Barrel medic).